Here is a 387-residue protein sequence, read N- to C-terminus: MGEAVAGTVGERFRELYGAEPEGVWAAPGRVNLIGEHTDYNDGFVMPFALPHQAVAAVSRRDDGILRLHSADIDADPVELRVADLAPGSDKSWTAYPSGVLWALREAGHELTGADVHLASTVPSGAGLSSSAALEVVLALAMNDLYALGLRGWQLARLCQRAENVYVGAPVGIMDQTASACCEAGHALFLDTRDLSQRQIPFDLAAEGMRLLVVDTRVKHSHSEGEYGKRRAGCEKGAALLGVDALRDVPYADLDAALERLGDEEEVRRLVRHVVTEDERVERVVALLESGDTRAIGAVLVEGHASLRDDFRISCPELDLVVDTALASGALGARMTGGGFGGSAIVLVEAAGVDAVTKAVEDAFAAAGLKAPRVFEAVPSAGARRLV.

Position 36 to 39 (36 to 39 (EHTD)) interacts with substrate. Residues Ser70 and 125 to 131 (GAGLSSS) contribute to the ATP site. The Mg(2+) site is built by Ser131 and Glu163. The active-site Proton acceptor is Asp175. Position 227 (Tyr227) interacts with substrate.

Belongs to the GHMP kinase family. GalK subfamily.

The protein resides in the cytoplasm. The enzyme catalyses alpha-D-galactose + ATP = alpha-D-galactose 1-phosphate + ADP + H(+). It participates in carbohydrate metabolism; galactose metabolism. Its function is as follows. Catalyzes the transfer of the gamma-phosphate of ATP to D-galactose to form alpha-D-galactose-1-phosphate (Gal-1-P). The protein is Galactokinase of Streptomyces coelicolor (strain ATCC BAA-471 / A3(2) / M145).